A 318-amino-acid polypeptide reads, in one-letter code: Aspartate carbamoyltransferase catalytic subunit (318 aa).

2 residues coordinate carbamoyl phosphate: R64 and T65. K92 contacts L-aspartate. 3 residues coordinate carbamoyl phosphate: R114, H142, and Q145. L-aspartate is bound by residues R175 and R229. 2 residues coordinate carbamoyl phosphate: G270 and P271.

It belongs to the aspartate/ornithine carbamoyltransferase superfamily. ATCase family. In terms of assembly, heterododecamer (2C3:3R2) of six catalytic PyrB chains organized as two trimers (C3), and six regulatory PyrI chains organized as three dimers (R2).

The catalysed reaction is carbamoyl phosphate + L-aspartate = N-carbamoyl-L-aspartate + phosphate + H(+). It participates in pyrimidine metabolism; UMP biosynthesis via de novo pathway; (S)-dihydroorotate from bicarbonate: step 2/3. Catalyzes the condensation of carbamoyl phosphate and aspartate to form carbamoyl aspartate and inorganic phosphate, the committed step in the de novo pyrimidine nucleotide biosynthesis pathway. In Rhodospirillum centenum (strain ATCC 51521 / SW), this protein is Aspartate carbamoyltransferase catalytic subunit.